A 311-amino-acid polypeptide reads, in one-letter code: MISIADLREVFRGDVKISASLAEHSAFKIGGKADIVLKPLDKADAINVIKFFHEKQKPHIVLGRGSNVLISDDGVREAVILLSGCLEKVDINGELVYAEAGVDLQKLAVQSLNHRLGGLEAFSGVPGSVGGAIVMNAGAHGHEIFELIDWVEVVRDGSLKKLRKNEIKARYRETDLAQDTVLSARLKLKPISEKEQAECFERRRELMEKRRNSQPLSLPNVGSIFKNPPPYNGESRQFAGQLIEACGLKGVREGGAMISDKHANFIVNLGNATASDVLALIELAKTKVRLRFGIDLELEIKLIGFTEHVEK.

The FAD-binding PCMH-type domain occupies 29-191 (IGGKADIVLK…LSARLKLKPI (163 aa)). Arg172 is an active-site residue. Ser223 acts as the Proton donor in catalysis. The active site involves Glu299.

Belongs to the MurB family. The cofactor is FAD.

It is found in the cytoplasm. The enzyme catalyses UDP-N-acetyl-alpha-D-muramate + NADP(+) = UDP-N-acetyl-3-O-(1-carboxyvinyl)-alpha-D-glucosamine + NADPH + H(+). It participates in cell wall biogenesis; peptidoglycan biosynthesis. Functionally, cell wall formation. This is UDP-N-acetylenolpyruvoylglucosamine reductase from Chloroherpeton thalassium (strain ATCC 35110 / GB-78).